Consider the following 644-residue polypeptide: Large subunit GTPase 1 homolog (644 aa).

Positions 1–31 (MGRRRAPGGGSLGRVLIRQQTQRSRSHRHTD) are disordered. Residues serine 93 and serine 97 each carry the phosphoserine modification. The CP-type G domain occupies 164 to 430 (WRQLWRVIER…LCDCPGLVMP (267 aa)). 212-215 (NKAD) is a binding site for GTP. A disordered region spans residues 253–345 (KEEVDSVAGD…KNAENQQVNN (93 aa)). Acidic residues predominate over residues 302–326 (CQEDEEEDWQTCSEEDSVPEEEEGC). GTP-binding positions include 379–386 (GYPNVGKS) and 423–426 (DCPG). Residues 618–644 (VPGKPWKKHGNRNKKEKSRRLYKHLDV) form a disordered region. Over residues 622–644 (PWKKHGNRNKKEKSRRLYKHLDV) the composition is skewed to basic residues.

The protein belongs to the TRAFAC class YlqF/YawG GTPase family. LSG1 subfamily.

The protein localises to the cytoplasm. Its subcellular location is the endoplasmic reticulum. It localises to the nucleus. The protein resides in the cajal body. It catalyses the reaction GTP + H2O = GDP + phosphate + H(+). Its function is as follows. Functions as a GTPase. May act by mediating the release of NMD3 from the 60S ribosomal subunit after export into the cytoplasm during the 60S ribosomal subunit maturation. The chain is Large subunit GTPase 1 homolog from Mus musculus (Mouse).